Reading from the N-terminus, the 182-residue chain is Dual-action ribosomal maturation protein DarP (182 aa).

Belongs to the DarP family.

It is found in the cytoplasm. Member of a network of 50S ribosomal subunit biogenesis factors which assembles along the 30S-50S interface, preventing incorrect 23S rRNA structures from forming. Promotes peptidyl transferase center (PTC) maturation. The chain is Dual-action ribosomal maturation protein DarP from Yersinia pseudotuberculosis serotype O:1b (strain IP 31758).